We begin with the raw amino-acid sequence, 430 residues long: Adenylosuccinate synthetase (430 aa).

Residues 12–18 (GDEGKGK) and 40–42 (GHT) contribute to the GTP site. D13 (proton acceptor) is an active-site residue. Mg(2+)-binding residues include D13 and G40. IMP-binding positions include 13–16 (DEGK), 38–41 (NAGH), T128, R142, Q223, T238, and R302. The active-site Proton donor is H41. 298-304 (TTTGRPR) provides a ligand contact to substrate. Residues R304, 330-332 (LLD), and 412-414 (SVG) contribute to the GTP site.

It belongs to the adenylosuccinate synthetase family. In terms of assembly, homodimer. The cofactor is Mg(2+).

The protein localises to the cytoplasm. The enzyme catalyses IMP + L-aspartate + GTP = N(6)-(1,2-dicarboxyethyl)-AMP + GDP + phosphate + 2 H(+). The protein operates within purine metabolism; AMP biosynthesis via de novo pathway; AMP from IMP: step 1/2. In terms of biological role, plays an important role in the de novo pathway of purine nucleotide biosynthesis. Catalyzes the first committed step in the biosynthesis of AMP from IMP. The protein is Adenylosuccinate synthetase of Listeria monocytogenes serotype 4b (strain CLIP80459).